A 233-amino-acid polypeptide reads, in one-letter code: MSEFDPNPPRRNFYGRRHGKTLRQSQKGYLSEDLGSLRPRGITVQENPERKPVAPSTIFGDDRPVWLEVGFGGGEHMVHMAARYPEIGIIGCEPFINGVAMLLGKIRAAGVENVSVHPGDARDLMDVLPDASIDKAFLNYPDPWPKARHHRRRFVTPEHLIPLARVMKPGAEFRVATDIPDYVRQTLEEVPQAGFDLVAEGPQAWEDWPSTRYEQKALREGRVPHYVTFRRRS.

A disordered region spans residues 1–36; the sequence is MSEFDPNPPRRNFYGRRHGKTLRQSQKGYLSEDLGS. Positions 68, 93, 120, and 142 each coordinate S-adenosyl-L-methionine. D142 is an active-site residue. Substrate-binding positions include K146, D178, and 211 to 214; that span reads TRYE.

The protein belongs to the class I-like SAM-binding methyltransferase superfamily. TrmB family.

The catalysed reaction is guanosine(46) in tRNA + S-adenosyl-L-methionine = N(7)-methylguanosine(46) in tRNA + S-adenosyl-L-homocysteine. It functions in the pathway tRNA modification; N(7)-methylguanine-tRNA biosynthesis. Catalyzes the formation of N(7)-methylguanine at position 46 (m7G46) in tRNA. In Paracoccus denitrificans (strain Pd 1222), this protein is tRNA (guanine-N(7)-)-methyltransferase.